A 515-amino-acid polypeptide reads, in one-letter code: ATP synthase subunit alpha (515 aa).

169 to 176 (GDRQTGKT) serves as a coordination point for ATP.

This sequence belongs to the ATPase alpha/beta chains family. F-type ATPases have 2 components, CF(1) - the catalytic core - and CF(0) - the membrane proton channel. CF(1) has five subunits: alpha(3), beta(3), gamma(1), delta(1), epsilon(1). CF(0) has three main subunits: a(1), b(2) and c(9-12). The alpha and beta chains form an alternating ring which encloses part of the gamma chain. CF(1) is attached to CF(0) by a central stalk formed by the gamma and epsilon chains, while a peripheral stalk is formed by the delta and b chains.

The protein localises to the cell inner membrane. It carries out the reaction ATP + H2O + 4 H(+)(in) = ADP + phosphate + 5 H(+)(out). Produces ATP from ADP in the presence of a proton gradient across the membrane. The alpha chain is a regulatory subunit. The sequence is that of ATP synthase subunit alpha from Myxococcus xanthus.